The sequence spans 258 residues: Polysialic acid transport protein KpsM (258 aa).

Residues Met-1–Leu-30 lie on the Cytoplasmic side of the membrane. Residues Leu-30–Arg-251 form the ABC transmembrane type-2 domain. Residues Gly-31–Met-54 traverse the membrane as a helical segment. At His-55–Ile-61 the chain is on the periplasmic side. The chain crosses the membrane as a helical span at residues Ser-62–Ser-81. At Lys-82–Ala-108 the chain is on the cytoplasmic side. The helical transmembrane segment at Arg-109–Gly-132 threads the bilayer. Topologically, residues Glu-133 to Leu-143 are periplasmic. The helical transmembrane segment at Val-144 to Gly-165 threads the bilayer. Over Lys-166–Val-174 the chain is Cytoplasmic. A helical transmembrane segment spans residues Leu-175–Ile-195. Residues Pro-196–Glu-226 are Periplasmic-facing. A helical membrane pass occupies residues Gly-227 to Leu-247. The Cytoplasmic portion of the chain corresponds to Tyr-248–Ser-258.

It belongs to the ABC-2 integral membrane protein family.

It is found in the cell inner membrane. Its function is as follows. KpsM and KpsT constitute a system for the transport of polysialic acid across the cytoplasmic membrane. This is Polysialic acid transport protein KpsM (kpsM) from Escherichia coli.